The primary structure comprises 245 residues: Polyhedrin (245 aa).

It belongs to the polyhedrin family.

In terms of biological role, major component of the virus occlusion bodies, which are large proteinaceous structures (polyhedra), that protect the virus from the outside environment for extended periods until they are ingested by insect larvae. This Hyphantria cunea nuclear polyhedrosis virus (HcNPV) protein is Polyhedrin (PH).